Reading from the N-terminus, the 604-residue chain is Threonine--tRNA ligase (604 aa).

The segment at 209–500 (DHRKLGQEMG…LTEHFGGEFP (292 aa)) is catalytic. Zn(2+) is bound by residues C301, H352, and H477.

The protein belongs to the class-II aminoacyl-tRNA synthetase family. As to quaternary structure, homodimer. Requires Zn(2+) as cofactor.

The protein localises to the cytoplasm. It catalyses the reaction tRNA(Thr) + L-threonine + ATP = L-threonyl-tRNA(Thr) + AMP + diphosphate + H(+). Its function is as follows. Catalyzes the attachment of threonine to tRNA(Thr) in a two-step reaction: L-threonine is first activated by ATP to form Thr-AMP and then transferred to the acceptor end of tRNA(Thr). Also edits incorrectly charged L-seryl-tRNA(Thr). This is Threonine--tRNA ligase from Helicobacter hepaticus (strain ATCC 51449 / 3B1).